Consider the following 119-residue polypeptide: Holo-[acyl-carrier-protein] synthase (119 aa).

2 residues coordinate Mg(2+): Asp-5 and Glu-51.

The protein belongs to the P-Pant transferase superfamily. AcpS family. Requires Mg(2+) as cofactor.

It is found in the cytoplasm. The catalysed reaction is apo-[ACP] + CoA = holo-[ACP] + adenosine 3',5'-bisphosphate + H(+). Transfers the 4'-phosphopantetheine moiety from coenzyme A to a Ser of acyl-carrier-protein. This is Holo-[acyl-carrier-protein] synthase from Helicobacter pylori (strain HPAG1).